The following is a 54-amino-acid chain: ATP synthase protein 8 (54 aa).

The helical transmembrane segment at 8–28 (WWLLNFFLGWTSLLVIFIILL) threads the bilayer.

The protein belongs to the ATPase protein 8 family. As to quaternary structure, F-type ATPases have 2 components, CF(1) - the catalytic core - and CF(0) - the membrane proton channel.

Its subcellular location is the mitochondrion membrane. Functionally, mitochondrial membrane ATP synthase (F(1)F(0) ATP synthase or Complex V) produces ATP from ADP in the presence of a proton gradient across the membrane which is generated by electron transport complexes of the respiratory chain. F-type ATPases consist of two structural domains, F(1) - containing the extramembraneous catalytic core and F(0) - containing the membrane proton channel, linked together by a central stalk and a peripheral stalk. During catalysis, ATP synthesis in the catalytic domain of F(1) is coupled via a rotary mechanism of the central stalk subunits to proton translocation. Part of the complex F(0) domain. Minor subunit located with subunit a in the membrane. The protein is ATP synthase protein 8 (MT-ATP8) of Patiria pectinifera (Starfish).